The sequence spans 121 residues: Large ribosomal subunit protein bL20 (121 aa).

The protein belongs to the bacterial ribosomal protein bL20 family.

In terms of biological role, binds directly to 23S ribosomal RNA and is necessary for the in vitro assembly process of the 50S ribosomal subunit. It is not involved in the protein synthesizing functions of that subunit. In Persephonella marina (strain DSM 14350 / EX-H1), this protein is Large ribosomal subunit protein bL20.